Consider the following 101-residue polypeptide: Small integral membrane protein 14 (101 aa).

Residues 71–81 (SDRRTADDAAI) show a composition bias toward basic and acidic residues. Residues 71–101 (SDRRTADDAAIEKPTGSSDDNTPPPPPPSAM) form a disordered region. Positions 92–101 (TPPPPPPSAM) are enriched in pro residues.

This is Small integral membrane protein 14 from Caenorhabditis elegans.